We begin with the raw amino-acid sequence, 361 residues long: AP2/ERF and B3 domain-containing transcription repressor TEM1 (361 aa).

The tract at residues 1-73 (MEYSCVDDSS…SRKLPSSKYK (73 aa)) is disordered. The span at 9–27 (SSTTSESLSISTTPKPTTT) shows a compositional bias: low complexity. The segment at residues 71–126 (KYKGVVPQPNGRWGAQIYEKHQRVWLGTFNEEEEAASSYDIAVRRFRGRDAVTNFK) is a DNA-binding region (AP2/ERF). Positions 195-306 (FEKTVTPSDV…QLYIHWKVRS (112 aa)) form a DNA-binding region, TF-B3.

This sequence belongs to the AP2/ERF transcription factor family. RAV subfamily. As to quaternary structure, interacts with FT. In terms of tissue distribution, expressed in leaves.

It localises to the nucleus. Its function is as follows. Transcriptional repressor of flowering time on long day plants. Acts directly on FT expression by binding 5'-CAACA-3' and 5'-CACCTG-3 sequences. Functionally redundant with TEM2. The polypeptide is AP2/ERF and B3 domain-containing transcription repressor TEM1 (TEM1) (Arabidopsis thaliana (Mouse-ear cress)).